We begin with the raw amino-acid sequence, 526 residues long: Bifunctional purine biosynthesis protein PurH (526 aa).

The MGS-like domain maps to 1-147 (MSVIKRALIS…KNWKHVAIVT (147 aa)).

Belongs to the PurH family.

It carries out the reaction (6R)-10-formyltetrahydrofolate + 5-amino-1-(5-phospho-beta-D-ribosyl)imidazole-4-carboxamide = 5-formamido-1-(5-phospho-D-ribosyl)imidazole-4-carboxamide + (6S)-5,6,7,8-tetrahydrofolate. It catalyses the reaction IMP + H2O = 5-formamido-1-(5-phospho-D-ribosyl)imidazole-4-carboxamide. Its pathway is purine metabolism; IMP biosynthesis via de novo pathway; 5-formamido-1-(5-phospho-D-ribosyl)imidazole-4-carboxamide from 5-amino-1-(5-phospho-D-ribosyl)imidazole-4-carboxamide (10-formyl THF route): step 1/1. It participates in purine metabolism; IMP biosynthesis via de novo pathway; IMP from 5-formamido-1-(5-phospho-D-ribosyl)imidazole-4-carboxamide: step 1/1. The chain is Bifunctional purine biosynthesis protein PurH from Neisseria gonorrhoeae (strain NCCP11945).